Consider the following 626-residue polypeptide: Chaperone protein HtpG (626 aa).

Positions 1–341 are a; substrate-binding; it reads METKQFKAES…SEDLSLNISR (341 aa). A b region spans residues 342–552; the sequence is EILQHDRQLK…EGELSIEMEK (211 aa). The interval 553-626 is c; sequence VLNAMPNNQN…FTNNICKIMK (74 aa).

The protein belongs to the heat shock protein 90 family. As to quaternary structure, homodimer.

The protein localises to the cytoplasm. In terms of biological role, molecular chaperone. Has ATPase activity. The chain is Chaperone protein HtpG from Clostridium botulinum (strain 657 / Type Ba4).